Here is a 381-residue protein sequence, read N- to C-terminus: Diguanylate cyclase DosC (381 aa).

Heme is bound at residue His98. Residues 325–381 enclose the GGDEF domain; the sequence is TPLSVLIIDVDKFKEINDTWGHNTGDEILRKVSFLSQKRLVKSKILGAGSSRKLAVS. Mg(2+) is bound at residue Asp333. The substrate site is built by Asn341 and Asp350.

Heme serves as cofactor. It depends on Mg(2+) as a cofactor.

It catalyses the reaction 2 GTP = 3',3'-c-di-GMP + 2 diphosphate. The protein operates within purine metabolism; 3',5'-cyclic di-GMP biosynthesis. In terms of biological role, globin-coupled heme-based oxygen sensor protein displaying diguanylate cyclase (DGC) activity in response to oxygen availability. Thus, catalyzes the synthesis of cyclic diguanylate (c-di-GMP) via the condensation of 2 GTP molecules. Cyclic-di-GMP is a second messenger which controls cell surface-associated traits in bacteria. The polypeptide is Diguanylate cyclase DosC (dosC) (Shigella flexneri serotype 5b (strain 8401)).